The sequence spans 242 residues: Pyridoxine 5'-phosphate synthase (242 aa).

Asn9 contacts 3-amino-2-oxopropyl phosphate. Residue 11–12 coordinates 1-deoxy-D-xylulose 5-phosphate; the sequence is DH. Arg20 provides a ligand contact to 3-amino-2-oxopropyl phosphate. Catalysis depends on His45, which acts as the Proton acceptor. Arg47 and His52 together coordinate 1-deoxy-D-xylulose 5-phosphate. Catalysis depends on Glu72, which acts as the Proton acceptor. Thr102 contributes to the 1-deoxy-D-xylulose 5-phosphate binding site. His193 (proton donor) is an active-site residue. 3-amino-2-oxopropyl phosphate-binding positions include Gly194 and 215–216; that span reads GH.

Belongs to the PNP synthase family. Homooctamer; tetramer of dimers.

The protein resides in the cytoplasm. The catalysed reaction is 3-amino-2-oxopropyl phosphate + 1-deoxy-D-xylulose 5-phosphate = pyridoxine 5'-phosphate + phosphate + 2 H2O + H(+). Its pathway is cofactor biosynthesis; pyridoxine 5'-phosphate biosynthesis; pyridoxine 5'-phosphate from D-erythrose 4-phosphate: step 5/5. In terms of biological role, catalyzes the complicated ring closure reaction between the two acyclic compounds 1-deoxy-D-xylulose-5-phosphate (DXP) and 3-amino-2-oxopropyl phosphate (1-amino-acetone-3-phosphate or AAP) to form pyridoxine 5'-phosphate (PNP) and inorganic phosphate. In Idiomarina loihiensis (strain ATCC BAA-735 / DSM 15497 / L2-TR), this protein is Pyridoxine 5'-phosphate synthase.